Reading from the N-terminus, the 348-residue chain is GMP reductase 2 (348 aa).

NADP(+) is bound by residues Ser-26–Arg-27, Lys-78, Asp-129–Ala-131, and Ile-180–Gly-181. K(+) is bound by residues Gly-181, Gly-183, and Cys-186. Cys-186 functions as the Thioimidate intermediate in the catalytic mechanism. The active-site Proton donor/acceptor is Thr-188. Residue Arg-189 coordinates K(+). Residues Asp-219–Gly-221, Gly-242–Gly-243, Gly-268–Ser-270, and Arg-286–Gly-290 each bind GMP. Residues Met-269 and Tyr-285–Arg-286 each bind NADP(+). N6-acetyllysine is present on Lys-291. Ser-314–Thr-317 provides a ligand contact to NADP(+).

The protein belongs to the IMPDH/GMPR family. GuaC type 1 subfamily. As to quaternary structure, homotetramer.

It carries out the reaction IMP + NH4(+) + NADP(+) = GMP + NADPH + 2 H(+). Its function is as follows. Catalyzes the irreversible NADPH-dependent deamination of GMP to IMP. It functions in the conversion of nucleobase, nucleoside and nucleotide derivatives of G to A nucleotides, and in maintaining the intracellular balance of A and G nucleotides. Plays a role in modulating cellular differentiation. This is GMP reductase 2 from Mus musculus (Mouse).